The following is a 121-amino-acid chain: Large ribosomal subunit protein bL19 (121 aa).

Belongs to the bacterial ribosomal protein bL19 family.

Its function is as follows. This protein is located at the 30S-50S ribosomal subunit interface and may play a role in the structure and function of the aminoacyl-tRNA binding site. This chain is Large ribosomal subunit protein bL19, found in Chlamydia trachomatis serovar L2 (strain ATCC VR-902B / DSM 19102 / 434/Bu).